The chain runs to 645 residues: MNHKRIALNYFYFSMWTGLSGAALATMIRLEMAYPGSPFFKGDSIKYLQVATAHGLIMVFFVVVPIFFGGFANFLIPYHVGSKDVAFPRLNSIGFWIQPLGFLLVAKIAFLRTTSWKYYDKTSFFLQPYNKSLYRDFFNFLTGELSFNPFKKSLDESLFLFLWKPRKKITNTEYTSFFFNPLNLSFLDSFFYYSDNLWSLANKVVSSRRKKIYVTKCSNRAAVTAGWTFITPFSSNMKYSGFGAQDVLSVAVVLAGISTTISLLTLITRRTLVAPGLRNRRVLIPFITISLLLTLRLLAIVTPILGAAVLMSLMDRHWQTSFFDFAYGGDPILFQHLFWFFGHPEVYILIIPSFGVANIVLPFYTMRRMSSKHHMIWAVYVMAYMGFVVWGHHMYLVGLDHRSRNIYSTITIMICLPATIKLVNWTLTLANAAIHVDLVFLFFCSYVFFFLTGGFTGMWLSHVGLNISVHDTFYVVAHFHLMLAGAAMMGAFTGLYYYYNTFFDVQYSKIFGFLHLVYYSAGIWTTFFPMFFLGFSGLPRRIHDFPAFFLGWHGLASCGHFLTLAGVCFFFFGIFDSTSENKSSILANFGIPKIAKRAHLYFFKISYNNYTNEIASELPKVEVRKFIIENTFGEYECVKLVPVTK.

A helical transmembrane segment spans residues 8-28 (LNYFYFSMWTGLSGAALATMI). Ca(2+) contacts are provided by Glu31 and Gly36. His54 serves as a coordination point for Fe(II)-heme a. The next 8 helical transmembrane spans lie at 56 to 76 (LIMV…NFLI), 90 to 110 (LNSI…KIAF), 247 to 267 (VLSV…LTLI), 282 to 302 (VLIP…AIVT), 337 to 357 (LFWF…FGVA), 376 to 396 (IWAV…HMYL), 410 to 430 (ITIM…LTLA), and 438 to 458 (LVFL…FTGM). His343 is a Cu cation binding site. A cross-link (1'-histidyl-3'-tyrosine (His-Tyr)) is located at residues 343 to 347 (HPEVY). Residue Tyr347 coordinates O2. The Cu cation site is built by His392 and His393. Positions 470 and 471 each coordinate Mg(2+). The next 3 membrane-spanning stretches (helical) occupy residues 475–495 (VVAH…FTGL), 513–533 (FLHL…MFFL), and 555–575 (LASC…FGIF). His478 is a heme a3 binding site. Position 480 (His480) interacts with Fe(II)-heme a.

Belongs to the heme-copper respiratory oxidase family. As to quaternary structure, component of the cytochrome c oxidase (complex IV, CIV), a multisubunit enzyme composed of a catalytic core of 3 subunits and several supernumerary subunits. The complex exists as a monomer or a dimer and forms supercomplexes (SCs) in the inner mitochondrial membrane with ubiquinol-cytochrome c oxidoreductase (cytochrome b-c1 complex, complex III, CIII). It depends on heme as a cofactor. Cu cation serves as cofactor.

The protein localises to the mitochondrion inner membrane. It catalyses the reaction 4 Fe(II)-[cytochrome c] + O2 + 8 H(+)(in) = 4 Fe(III)-[cytochrome c] + 2 H2O + 4 H(+)(out). The protein operates within energy metabolism; oxidative phosphorylation. In terms of biological role, component of the cytochrome c oxidase, the last enzyme in the mitochondrial electron transport chain which drives oxidative phosphorylation. The respiratory chain contains 3 multisubunit complexes succinate dehydrogenase (complex II, CII), ubiquinol-cytochrome c oxidoreductase (cytochrome b-c1 complex, complex III, CIII) and cytochrome c oxidase (complex IV, CIV), that cooperate to transfer electrons derived from NADH and succinate to molecular oxygen, creating an electrochemical gradient over the inner membrane that drives transmembrane transport and the ATP synthase. Cytochrome c oxidase is the component of the respiratory chain that catalyzes the reduction of oxygen to water. Electrons originating from reduced cytochrome c in the intermembrane space (IMS) are transferred via the dinuclear copper A center (CU(A)) of subunit 2 and heme A of subunit 1 to the active site in subunit 1, a binuclear center (BNC) formed by heme A3 and copper B (CU(B)). The BNC reduces molecular oxygen to 2 water molecules using 4 electrons from cytochrome c in the IMS and 4 protons from the mitochondrial matrix. The sequence is that of Cytochrome c oxidase subunit 1 (COI) from Paramecium tetraurelia.